A 452-amino-acid polypeptide reads, in one-letter code: Bifunctional protein GlmU (452 aa).

The interval 1–226 (MSLDIVILAA…AMEVQGANDR (226 aa)) is pyrophosphorylase. UDP-N-acetyl-alpha-D-glucosamine is bound by residues 8 to 11 (LAAG), K22, Q73, 78 to 79 (GT), 99 to 101 (YGD), G136, E151, N166, and N224. Residue D101 coordinates Mg(2+). Residue N224 coordinates Mg(2+). Positions 227–247 (IQLAELERHYQLRAARRLMAQ) are linker. The N-acetyltransferase stretch occupies residues 248–452 (GVTLRDPARF…IDGWQRPTKK (205 aa)). UDP-N-acetyl-alpha-D-glucosamine is bound by residues R330 and K348. The active-site Proton acceptor is H360. UDP-N-acetyl-alpha-D-glucosamine contacts are provided by Y363 and N374. Acetyl-CoA is bound by residues A377, 383 to 384 (NY), S402, A420, and R437.

In the N-terminal section; belongs to the N-acetylglucosamine-1-phosphate uridyltransferase family. It in the C-terminal section; belongs to the transferase hexapeptide repeat family. Homotrimer. It depends on Mg(2+) as a cofactor.

The protein resides in the cytoplasm. It catalyses the reaction alpha-D-glucosamine 1-phosphate + acetyl-CoA = N-acetyl-alpha-D-glucosamine 1-phosphate + CoA + H(+). The enzyme catalyses N-acetyl-alpha-D-glucosamine 1-phosphate + UTP + H(+) = UDP-N-acetyl-alpha-D-glucosamine + diphosphate. Its pathway is nucleotide-sugar biosynthesis; UDP-N-acetyl-alpha-D-glucosamine biosynthesis; N-acetyl-alpha-D-glucosamine 1-phosphate from alpha-D-glucosamine 6-phosphate (route II): step 2/2. It participates in nucleotide-sugar biosynthesis; UDP-N-acetyl-alpha-D-glucosamine biosynthesis; UDP-N-acetyl-alpha-D-glucosamine from N-acetyl-alpha-D-glucosamine 1-phosphate: step 1/1. It functions in the pathway bacterial outer membrane biogenesis; LPS lipid A biosynthesis. Catalyzes the last two sequential reactions in the de novo biosynthetic pathway for UDP-N-acetylglucosamine (UDP-GlcNAc). The C-terminal domain catalyzes the transfer of acetyl group from acetyl coenzyme A to glucosamine-1-phosphate (GlcN-1-P) to produce N-acetylglucosamine-1-phosphate (GlcNAc-1-P), which is converted into UDP-GlcNAc by the transfer of uridine 5-monophosphate (from uridine 5-triphosphate), a reaction catalyzed by the N-terminal domain. The protein is Bifunctional protein GlmU of Stutzerimonas stutzeri (strain A1501) (Pseudomonas stutzeri).